We begin with the raw amino-acid sequence, 232 residues long: Probable anion ABC transporter permease protein HVO_1887 (232 aa).

The region spanning 16–217 is the ABC transmembrane type-1 domain; that stretch reads TAVSLYVSTA…ALVLGVNALG (202 aa). The next 5 membrane-spanning stretches (helical) occupy residues 23–43, 55–75, 93–113, 146–166, and 198–218; these read STAA…AVGF, VIST…LLVL, MILS…LSAV, IVTA…SVLI, and TGIA…ALGA.

The protein belongs to the binding-protein-dependent transport system permease family. As to quaternary structure, the complex is composed of two ATP-binding proteins (HVO_1886), two transmembrane proteins (HVO_1887) and a solute-binding protein (HVO_1888).

The protein resides in the cell membrane. Its function is as follows. Part of an ABC transporter complex involved in anions import. Responsible for the translocation of the substrate across the membrane. This is Probable anion ABC transporter permease protein HVO_1887 from Haloferax volcanii (strain ATCC 29605 / DSM 3757 / JCM 8879 / NBRC 14742 / NCIMB 2012 / VKM B-1768 / DS2) (Halobacterium volcanii).